The sequence spans 334 residues: tRNA U34 carboxymethyltransferase (334 aa).

Residues lysine 91, tryptophan 105, lysine 110, glycine 130, 152 to 154 (DPT), 181 to 182 (IE), methionine 196, tyrosine 200, and arginine 315 each bind carboxy-S-adenosyl-L-methionine.

It belongs to the class I-like SAM-binding methyltransferase superfamily. CmoB family. As to quaternary structure, homotetramer.

It catalyses the reaction carboxy-S-adenosyl-L-methionine + 5-hydroxyuridine(34) in tRNA = 5-carboxymethoxyuridine(34) in tRNA + S-adenosyl-L-homocysteine + H(+). Functionally, catalyzes carboxymethyl transfer from carboxy-S-adenosyl-L-methionine (Cx-SAM) to 5-hydroxyuridine (ho5U) to form 5-carboxymethoxyuridine (cmo5U) at position 34 in tRNAs. This Klebsiella pneumoniae subsp. pneumoniae (strain ATCC 700721 / MGH 78578) protein is tRNA U34 carboxymethyltransferase.